The following is a 618-amino-acid chain: Mitochondrial Rho GTPase 1 (618 aa).

The Cytoplasmic segment spans residues 1–592 (MKKDVRILLV…TQADLKSSTF (592 aa)). The region spanning 2–168 (KKDVRILLVG…FYYAQKAVLH (167 aa)) is the Miro 1 domain. The GTP site is built by Arg14, Gly16, Lys17, Thr18, and Ser19. Thr18 provides a ligand contact to Mg(2+). Residues Pro35 and Asp57 each coordinate Mg(2+). Position 59 (Ser59) interacts with GTP. At Lys92 the chain carries N6-acetyllysine. GTP is bound by residues Asn118, Lys119, Asp121, Ala149, and Lys150. Residue Lys153 forms a Glycyl lysine isopeptide (Lys-Gly) (interchain with G-Cter in ubiquitin) linkage. In terms of domain architecture, EF-hand 1 spans 184–219 (ACIKALTRIFKISDQDNDGTLNDAELNFFQRICFNT). 5 residues coordinate Ca(2+): Asp197, Asp199, Asp201, Thr203, and Glu208. Lys235 is covalently cross-linked (Glycyl lysine isopeptide (Lys-Gly) (interchain with G-Cter in ubiquitin)). Residues 304-339 (HAYLFLQSTFDKHDLDRDCALSPDELKDLFKVFPYI) form the EF-hand 2 domain. Residues Asp317, Asp319, Asp321, Ala323, and Glu328 each coordinate Ca(2+). Residues 416–579 (RNVFRCNVIG…FVKLTTMAMY (164 aa)) enclose the Miro 2 domain. 7 residues coordinate GTP: Asn428, Cys429, Gly430, Lys431, Ser432, Gly433, and Lys447. Asn428 lines the Mg(2+) pocket. Positions 428, 429, 430, 431, 432, 433, 447, 454, 477, 478, 528, 530, 558, 559, and 560 each coordinate GDP. GTP-binding residues include Lys528, Asp530, Thr558, and Cys559. Lys572 is covalently cross-linked (Glycyl lysine isopeptide (Lys-Gly) (interchain with G-Cter in ubiquitin)). Residues 593–615 (WLRASFGATVFAVLGFAMYKALL) form a helical; Anchor for type IV membrane protein membrane-spanning segment. Over 616-618 (KQR) the chain is Mitochondrial intermembrane.

The protein belongs to the mitochondrial Rho GTPase family. Homodimer. Interacts with the kinesin-binding proteins TRAK1/OIP106 and TRAK2/GRIF1, forming a link between mitochondria and the trafficking apparatus of the microtubules. Interacts with RAP1GDS1. Interacts with ARMCX1. Found in a complex with KIF5B, OGT, RHOT2 and TRAK1. In terms of processing, ubiquitinated by PRKN during mitophagy, leading to its degradation and enhancement of mitophagy. Deubiquitinated by USP30. Acetylation on Lys-92 decreases sensitivity of mitochondrial transport to elevated Ca(2+) levels, increases mitochondrial transport and promotes axon growth. Deacetylated by HDAC6 which blocks mitochondrial transport and mediates axon growth inhibition. As to expression, ubiquitously expressed. Expressed at high level in heart and skeletal muscle.

It is found in the mitochondrion outer membrane. The enzyme catalyses GTP + H2O = GDP + phosphate + H(+). It catalyses the reaction ATP + H2O = ADP + phosphate + H(+). The catalysed reaction is UTP + H2O = UDP + phosphate + H(+). Its function is as follows. Atypical mitochondrial nucleoside-triphosphatase (NTPase) involved in mitochondrial trafficking. Probably involved in control of anterograde transport of mitochondria and their subcellular distribution. Promotes mitochondrial fission during high calcium conditions. Can hydrolyze GTP, ATP and UTP. This is Mitochondrial Rho GTPase 1 (RHOT1) from Homo sapiens (Human).